Reading from the N-terminus, the 425-residue chain is Histidine--tRNA ligase (425 aa).

Belongs to the class-II aminoacyl-tRNA synthetase family. In terms of assembly, homodimer.

The protein localises to the cytoplasm. It carries out the reaction tRNA(His) + L-histidine + ATP = L-histidyl-tRNA(His) + AMP + diphosphate + H(+). This Shewanella sp. (strain MR-4) protein is Histidine--tRNA ligase.